Here is a 397-residue protein sequence, read N- to C-terminus: Dual specificity mitogen-activated protein kinase kinase 2 (397 aa).

Positions 1 to 21 (MAPKRRPVPLIIAPTGEGQST) are disordered. The Protein kinase domain maps to 69–366 (FDPICELGAG…LKMLMGHTFI (298 aa)). ATP is bound by residues 75–83 (LGAGNGGVV) and Lys98. The active-site Proton acceptor is Asp191. Residues Ser219 and Ser223 each carry the phosphoserine; by RAF modification. Residues 284–306 (GGAEGHSMSPRQRPPGRPVSGHG) are disordered.

This sequence belongs to the protein kinase superfamily. STE Ser/Thr protein kinase family. MAP kinase kinase subfamily. In terms of processing, phosphorylation on Ser/Thr by MAP kinase kinase kinases (RAF) positively regulates the kinase activity.

It catalyses the reaction L-seryl-[protein] + ATP = O-phospho-L-seryl-[protein] + ADP + H(+). It carries out the reaction L-threonyl-[protein] + ATP = O-phospho-L-threonyl-[protein] + ADP + H(+). The enzyme catalyses L-tyrosyl-[protein] + ATP = O-phospho-L-tyrosyl-[protein] + ADP + H(+). Functionally, catalyzes the concomitant phosphorylation of a threonine and a tyrosine residue in a Thr-Glu-Tyr sequence located in MAP kinases. The protein is Dual specificity mitogen-activated protein kinase kinase 2 (map2k2) of Cyprinus carpio (Common carp).